The chain runs to 992 residues: MESFEGQGDSRQSPDNERGDNVQTTGEHDQDPGPGPPSSGASERLVPEESYSRDQQPWGQSRGDENRGWMQRIRRRRRRRAALSGHLLDTEDNVPPWLPPHDITPYTARNIRDAACRAVKQSHLQALSNLILDSGLDTQHILCFVMAARQRLQDIRRGPLVAEGGVGWRHWLLTSPSQSWPMGYRTATLRTLTPVPNRVGADSIMLTATFGCQNAARTLNTFSATVWTPPHAGPREQERYAREAEVRFLRGKWQRRYRRIYDLIELCGSLHHIWQNLLQTEENLLDFVRFMGVMSSCNNPAVNYWFHKTIGNFKPYYPWNAPPNENPYHARRGIKEHVIQNAFRKAQIQGLSMLATGGEPRGDATSETSSDEDTGRQGSDVELESSDDELPYIDPNMEPVQQRPVMFVSRVPAKKPRKLPWPTPKTHPVKRTNVKTSDRSDKAEAQSTPERPGPSEQSSVTVEPAHPTPVEMPMVILHQPPPVPKPVPVKPTPPPSRRRRGACVVYDDDVIEVIDVETTEDSSSVSQPNKPHRKHQDGFQRSGRRQKRAAPPTVSPSDTGPPAVGPPAAGPPAAGPPAAGPPAAGPPAAGPPAAGPRILAPLSAGPPAAGPHIVTPPSARPRIMAPPVVRMFMRERQLPQSTGRKPQCFWEMRAGREITQMQQEPSSHLQSATQPTTPRPSWAPSVCALSVMDAGKAQPIESSHLSSMSPTQPISHEEQPRYEDPDAPLDLSLHPDVAAQPAPQAPYQGYQEPPAPQAPYQGYQEPPPPQAPYQGYQEPPAHGLQSSSYPGYAGPWTPRSQHPCYRHPWAPWSQDPVHGHTQGPWDPRAPHLPPQWDGSAGHGQDQVSQFPHLQSETGPPRLQLSLVPLVSSSAPSWSSPQPRAPIRPIPTRFPPPPMPLQDSMAVGCDSSGTACPSMPFASDYSQGAFTPLDINATTPKRPRVEESSHGPARCSQATAEAQEILSDNSEISVFPKDAKQTDYDASTESELD.

Positions 1–70 are disordered; that stretch reads MESFEGQGDS…SRGDENRGWM (70 aa). Residues 12 to 31 are compositionally biased toward basic and acidic residues; the sequence is QSPDNERGDNVQTTGEHDQD. The segment at 130–159 is interaction with host PIM1; that stretch reads LILDSGLDTQHILCFVMAARQRLQDIRRGP. 3 disordered regions span residues 355-905, 931-954, and 967-992; these read ATGG…DSMA, PLDINATTPKRPRVEESSHGPARC, and DNSEISVFPKDAKQTDYDASTESELD. Residues 381–391 show a composition bias toward acidic residues; the sequence is VELESSDDELP. The segment covering 445–461 has biased composition (polar residues); that stretch reads AQSTPERPGPSEQSSVT. Residues 479–495 are compositionally biased toward pro residues; sequence QPPPVPKPVPVKPTPPP. Acidic residues predominate over residues 506–520; it reads YDDDVIEVIDVETTE. The stretch at 551–555 is one 1-1; approximate repeat; that stretch reads PPTVS. Positions 551-610 are 12 X 5 AA approximate tandem repeats of P-P-A-A-G; it reads PPTVSPSDTGPPAVGPPAAGPPAAGPPAAGPPAAGPPAAGPPAAGPRILAPLSAGPPAAG. One copy of the 2-1; approximate repeat lies at 556-560; it reads PSDTG. Residues 561–565 form a 3-1; approximate repeat; it reads PPAVG. Pro residues predominate over residues 563–594; that stretch reads AVGPPAAGPPAAGPPAAGPPAAGPPAAGPPAA. A run of 6 repeats spans residues 566 to 570, 571 to 575, 576 to 580, 581 to 585, 586 to 590, and 591 to 595. A compositionally biased stretch (low complexity) spans 595-611; the sequence is GPRILAPLSAGPPAAGP. The 10-1; approximate repeat unit spans residues 596–600; the sequence is PRILA. The 11-1; approximate repeat unit spans residues 601 to 605; it reads PLSAG. Residues 606–610 form a 12-1 repeat; sequence PPAAG. 2 stretches are compositionally biased toward polar residues: residues 659-676 and 700-714; these read TQMQQEPSSHLQSATQPT and IESSHLSSMSPTQPI. A compositionally biased stretch (basic and acidic residues) spans 715–724; the sequence is SHEEQPRYED. Composition is skewed to low complexity over residues 738 to 764 and 772 to 781; these read AAQPAPQAPYQGYQEPPAPQAPYQGYQ and PYQGYQEPPA. Tandem repeats lie at residues 741-753, 754-766, and 767-779. The 3 X 13 AA tandem repeats of P-[AP]-P-Q-A-P-Y-Q-G-Y-Q-E-P stretch occupies residues 741–779; sequence PAPQAPYQGYQEPPAPQAPYQGYQEPPPPQAPYQGYQEP. Over residues 845-857 the composition is skewed to polar residues; the sequence is DQVSQFPHLQSET. A compositionally biased stretch (low complexity) spans 859-881; it reads PPRLQLSLVPLVSSSAPSWSSPQ. The span at 882–899 shows a compositional bias: pro residues; sequence PRAPIRPIPTRFPPPPMP.

The protein belongs to the herpesviridae EBNA-6 family. As to quaternary structure, interacts with host CTPB1; this interaction leads to gene repression, but also seems to interfere with the repressive function of CtBP pre-bound to DNA, leading to EBNA6 mediated up-regulation of many host genes. Interacts with host MYC; this interaction enhances MYC stability. Interacts (via N-terminus) with host RBPJ. Interacts (via N-terminus) with host histone H2AX; this interaction facilitates H2AX proteasomal degradation. Interacts with host TP73; this interaction inhibits TP73-mediated apoptotic pathway. Interacts (via N-terminus) with host PIM1; this interaction upregulates and stabilizes PIM1 and induces cell proliferation by inhibiting the growth suppressive properties of p21.

The protein localises to the host nucleus. Its subcellular location is the host nucleus matrix. In terms of biological role, plays an essential role for the activation and immortalization of human B-cells. Represses transcription of viral promoters TP1 and Cp through interaction with host RBPJ, and inhibits EBNA2-mediated activation of these promoters. Targets host chromatin through interactions with host transcription factors, especially RBPJ and IRF4. Alternatively, EBNA6 also regulates the transcription of the EBV oncogene LMP1 in a cell cycle-dependent manner. Modulates the activity of several host proteins involved in cell cycle regulation including host cyclin A, MYC, RB, p21 and p27 mainly through binding to the host SCF(SKP2) complex. Inhibits the promoter of host H2AX and targets H2AX to proteasomal degradation in order to promote latency and cell proliferation. Upregulates host PIM1 expression and stabilization. Potentiates PIM1 to promote cell proliferation by inhibiting the growth suppressive properties of p21. This Epstein-Barr virus (strain B95-8) (HHV-4) protein is Epstein-Barr nuclear antigen 6 (EBNA6).